The following is a 321-amino-acid chain: Glutaminase (321 aa).

7 residues coordinate substrate: Ser69, Asn120, Glu165, Asn172, Tyr196, Tyr248, and Val266.

It belongs to the glutaminase family. As to quaternary structure, homotetramer.

The enzyme catalyses L-glutamine + H2O = L-glutamate + NH4(+). This is Glutaminase from Bacteroides fragilis (strain YCH46).